The following is a 293-amino-acid chain: 4-hydroxy-tetrahydrodipicolinate synthase (293 aa).

T45 contributes to the pyruvate binding site. The active-site Proton donor/acceptor is Y133. K161 serves as the catalytic Schiff-base intermediate with substrate. I203 lines the pyruvate pocket.

Belongs to the DapA family. As to quaternary structure, homotetramer; dimer of dimers.

The protein localises to the cytoplasm. It carries out the reaction L-aspartate 4-semialdehyde + pyruvate = (2S,4S)-4-hydroxy-2,3,4,5-tetrahydrodipicolinate + H2O + H(+). It functions in the pathway amino-acid biosynthesis; L-lysine biosynthesis via DAP pathway; (S)-tetrahydrodipicolinate from L-aspartate: step 3/4. Its function is as follows. Catalyzes the condensation of (S)-aspartate-beta-semialdehyde [(S)-ASA] and pyruvate to 4-hydroxy-tetrahydrodipicolinate (HTPA). This Aliivibrio fischeri (strain MJ11) (Vibrio fischeri) protein is 4-hydroxy-tetrahydrodipicolinate synthase.